Here is a 2696-residue protein sequence, read N- to C-terminus: Histone-lysine N-methyltransferase, H3 lysine-36 specific (2696 aa).

At Ser117 the chain carries Phosphoserine. Disordered regions lie at residues 207-252 (MGSE…EKAA) and 281-311 (DPDS…PFCQ). The span at 236–248 (QKNKQRNEVDGSN) shows a compositional bias: basic and acidic residues. 2 stretches are compositionally biased toward polar residues: residues 281 to 290 (DPDSSTSTLG) and 297 to 306 (GTSSSSTSQE). The PWWP 1 domain occupies 323–388 (VGDLIWAKFK…AGKAIVMFEG (66 aa)). Phosphoserine is present on residues Ser483 and Ser486. Residues 487 to 514 (ADEKEKPCAKSRARKSSDNPKRTSVKKG) form a disordered region. Phosphoserine is present on Ser766. The interval 872-891 (LGEDVSDSGTSKPSKPLLFS) is disordered. Lys906 participates in a covalent cross-link: Glycyl lysine isopeptide (Lys-Gly) (interchain with G-Cter in SUMO2). Disordered stretches follow at residues 936 to 1035 (YRSP…DAFS), 1067 to 1093 (VLQG…PLQI), 1112 to 1134 (SKVK…NGKG), 1243 to 1272 (SIGD…SEKK), 1294 to 1344 (PKKK…EPPV), 1382 to 1428 (SPRP…KKGD), and 1480 to 1534 (KMQC…MQGE). Residues 948–961 (SPVGVSKVLVSGGS) are compositionally biased toward low complexity. Positions 971–982 (GTQNSANPSPSG) are enriched in polar residues. Basic and acidic residues-rich tracts occupy residues 1000–1017 (SDKR…DCVT), 1070–1090 (GDRE…KEDP), and 1112–1124 (SKVK…KISE). Basic and acidic residues predominate over residues 1300–1314 (KVQEQVHKVSSRCEE). Residues 1323–1337 (SSAQNKQVDENSLIS) are compositionally biased toward polar residues. Lys1339 participates in a covalent cross-link: Glycyl lysine isopeptide (Lys-Gly) (interchain with G-Cter in SUMO2). Ser1510 carries the phosphoserine modification. The segment covering 1513-1523 (ETVEEGVEHDP) has biased composition (basic and acidic residues). PHD-type zinc fingers lie at residues 1543-1589 (ENVC…CRTG), 1590-1646 (IHTC…CHAA), and 1707-1751 (VSWC…CKAG). Residues 1756–1818 (YREIVWVKVG…QARVFPYMEG (63 aa)) form the PWWP 2 domain. The 51-residue stretch at 1890-1940 (SEIPRCNCKATDENPCGIDSECINRMLLYECHPTVCPAGGRCQNQCFSKRQ) folds into the AWS domain. Positions 1942 to 2059 (PEVEIFRTLQ…AGTELTFNYN (118 aa)) constitute an SET domain. S-adenosyl-L-methionine is bound by residues 1952–1954 (RGW), 1994–1997 (TNFY), 2020–2021 (NH), Asn2065, and Lys2071. The inhibits enzyme activity in the absence of bound histone stretch occupies residues 2060–2066 (LECLGNG). Residues 2066-2082 (GKTVCKCGAPNCSGFLG) form the Post-SET domain. The disordered stretch occupies residues 2091-2111 (ATEEKSKKFKKKQQGKRRTQG). Residues 2097-2108 (KKFKKKQQGKRR) show a composition bias toward basic residues. The PHD-type 4; atypical zinc-finger motif lies at 2118–2165 (EDECFSCGDAGQLVSCKKPGCPKVYHADCLNLTKRPAGKWECPWHQCD). Positions 2213–2422 (LEPGEIREYV…SLSQRLPPPE (210 aa)) are disordered. Residues 2222–2232 (VPPPVPLPPGP) show a composition bias toward pro residues. A compositionally biased stretch (basic and acidic residues) spans 2281-2298 (RPLERTDSRPQPLDKVRD). A compositionally biased stretch (polar residues) spans 2303-2314 (GTKSQSLVSSQR). A compositionally biased stretch (low complexity) spans 2330–2348 (SDKPSPVTSPSSSPSVRSQ). Ser2369 carries the post-translational modification Phosphoserine. 2 stretches are compositionally biased toward polar residues: residues 2371–2381 (RPQSLEKTSVP) and 2394–2404 (ITSSPKPQTSD). Thr2462 carries the phosphothreonine modification. Disordered stretches follow at residues 2464–2499 (RQKE…GLGH), 2553–2575 (TQAS…QSPG), 2595–2616 (KSGQ…EEKK), and 2665–2696 (LGRG…SEQK). Ser2471 is modified (phosphoserine). A Glycyl lysine isopeptide (Lys-Gly) (interchain with G-Cter in SUMO2) cross-link involves residue Lys2616. Residues 2674–2686 (EQNTLPALNQAPS) are compositionally biased toward polar residues.

Belongs to the class V-like SAM-binding methyltransferase superfamily. In terms of assembly, interacts with the ligand-binding domains of RARA and THRA in the absence of ligand; in the presence of ligand the interaction is severely disrupted but some binding still occurs. Interacts with the ligand-binding domains of RXRA and ESRRA only in the presence of ligand. Interacts with ZNF496. Interacts with AR DNA- and ligand-binding domains. Expressed in the fetal/adult brain, kidney, skeletal muscle, spleen, and the thymus, and faintly in the lung.

It is found in the nucleus. It localises to the chromosome. The catalysed reaction is L-lysyl(36)-[histone H3] + 2 S-adenosyl-L-methionine = N(6),N(6)-dimethyl-L-lysyl(36)-[histone H3] + 2 S-adenosyl-L-homocysteine + 2 H(+). Its function is as follows. Histone methyltransferase that dimethylates Lys-36 of histone H3 (H3K36me2). Transcriptional intermediary factor capable of both negatively or positively influencing transcription, depending on the cellular context. The protein is Histone-lysine N-methyltransferase, H3 lysine-36 specific (NSD1) of Homo sapiens (Human).